Here is a 969-residue protein sequence, read N- to C-terminus: Protein translocase subunit SecA (969 aa).

ATP contacts are provided by residues Gln99, 117–121 (GEGKT), and Asp631.

Belongs to the SecA family. As to quaternary structure, monomer and homodimer. Part of the essential Sec protein translocation apparatus which comprises SecA, SecYEG and auxiliary proteins SecDF. Other proteins may also be involved.

The protein localises to the cell inner membrane. Its subcellular location is the cytoplasm. It catalyses the reaction ATP + H2O + cellular proteinSide 1 = ADP + phosphate + cellular proteinSide 2.. Part of the Sec protein translocase complex. Interacts with the SecYEG preprotein conducting channel. Has a central role in coupling the hydrolysis of ATP to the transfer of proteins into and across the cell membrane, serving as an ATP-driven molecular motor driving the stepwise translocation of polypeptide chains across the membrane. The polypeptide is Protein translocase subunit SecA (Chlamydia trachomatis serovar L2 (strain ATCC VR-902B / DSM 19102 / 434/Bu)).